The chain runs to 265 residues: MRLYRDRAVVLRQHKLGEADRIVTLLTRDHGLVRAVAKGVRRTRSKFGSRLEPFAHIDAQLHPGRNLDIVTQVVSIDAFAADIVNDYGRYTCGCAMLETAERLAGEERAPAPALHRLTVGALRAVADGSRPRDLLLDAYLLRAMGIAGWVPALTECARCATPGPHRAFHIAAGGSVCPHCRPAGSTTPPLGVLDLMSALHDGDWEAAQGAPQSHRSYVSGLVAAHLQWHLERQLKTLPLVERFYQADRSVAERRAALIGQDSECG.

This sequence belongs to the RecO family.

In terms of biological role, involved in DNA repair and RecF pathway recombination. This Mycobacterium ulcerans (strain Agy99) protein is DNA repair protein RecO.